The chain runs to 90 residues: uncharacterized protein (90 aa).

A signal peptide spans 1–21 (MFKFSIPLLLFIFLFFSCINS). Residues 56–90 (SNEKLPERILSGSSGSCSSCSISSSNGSSSRSSKQ) form a disordered region. Low complexity predominate over residues 66 to 90 (SGSSGSCSSCSISSSNGSSSRSSKQ). Asn81 carries N-linked (GlcNAc...) asparagine glycosylation.

This is an uncharacterized protein from Dictyostelium discoideum (Social amoeba).